Reading from the N-terminus, the 245-residue chain is Adapter protein MecA (245 aa).

Belongs to the MecA family. As to quaternary structure, homodimer.

Enables the recognition and targeting of unfolded and aggregated proteins to the ClpC protease or to other proteins involved in proteolysis. The sequence is that of Adapter protein MecA from Streptococcus pneumoniae (strain ATCC BAA-255 / R6).